The sequence spans 612 residues: Proline-rich protein 14 (612 aa).

An N-acetylmethionine modification is found at Met-1. Composition is skewed to polar residues over residues 1-15 and 86-96; these read MDLP…QPSL and VCTQSPALPSQ. Disordered stretches follow at residues 1-48, 65-96, 119-150, and 206-256; these read MDLP…EKAS, VPLT…LPSQ, RARQ…QVPQ, and PTLT…PALE. A sufficient for heterochromatin association in interphase and chromatin association in anaphase region spans residues 1-135; that stretch reads MDLPGNSSPF…ALRMRSRAAS (135 aa). The interval 85–405 is required for the interaction with GRB2 and sufficient to promote the phosphorylation of AKT and cell proliferation; sequence PVCTQSPALP…MARTPPPPRP (321 aa). A required for nuclear lamina association region spans residues 136–392; it reads GPEESPSKKT…QSRPRRHTVG (257 aa). The span at 243–252 shows a compositional bias: pro residues; sequence ADPPESPVPD. Position 307 is a phosphoserine (Ser-307). 3 disordered regions span residues 323–405, 444–463, and 553–583; these read QSRA…PPRP, LGST…FSDP, and DSSL…PSQD. Over residues 342-359 the composition is skewed to polar residues; sequence WRTQCNSLAPVSKSSLGR. A compositionally biased stretch (pro residues) spans 366-379; that stretch reads LGPPDPGSWPPVPS. Positions 448-463 are enriched in basic and acidic residues; sequence KGKELRASKDKVFSDP. The interval 546 to 563 is required for nuclear localization; the sequence is RRAVEFRDSSLPRSRRPS. Positions 570-583 are enriched in polar residues; that stretch reads ASRTLTPNLAPSQD.

In terms of assembly, interacts (via proline-rich region) with GRB2 (via SH3 domain 2). Interacts (via N-terminus) with CBX5.

The protein localises to the chromosome. Its subcellular location is the nucleus. The protein resides in the nucleus lamina. It localises to the nucleoplasm. Functionally, functions in tethering peripheral heterochromatin to the nuclear lamina during interphase, possibly through the interaction with heterochromatin protein CBX5/HP1 alpha. Might play a role in reattaching heterochromatin to the nuclear lamina at mitotic exit. Promotes myoblast differentiation during skeletal myogenesis, possibly by stimulating transcription factor MyoD activity via binding to CBX5/HP1 alpha. Involved in the positive regulation of the PI3K-Akt-mTOR signaling pathway and in promoting cell proliferation, possibly via binding to GRB2. This Mus musculus (Mouse) protein is Proline-rich protein 14 (Prr14).